We begin with the raw amino-acid sequence, 311 residues long: Pyrimidine-specific ribonucleoside hydrolase RihA (311 aa).

His-240 is a catalytic residue.

This sequence belongs to the IUNH family. RihA subfamily.

In terms of biological role, hydrolyzes with equal efficiency cytidine or uridine to ribose and cytosine or uracil, respectively. The chain is Pyrimidine-specific ribonucleoside hydrolase RihA from Escherichia coli O9:H4 (strain HS).